The following is a 547-amino-acid chain: Undecaprenyl phosphate-alpha-4-amino-4-deoxy-L-arabinose arabinosyl transferase (547 aa).

Transmembrane regions (helical) follow at residues 83–103, 111–131, 174–194, 205–225, 253–273, 286–306, 311–331, 346–366, 378–398, and 408–428; these read FASAAATGLSALLIFWFALQL, FLASLIYLSLLIVYGIGTYSV, FLTKGFIALAVPVVVIVPYVI, FGPLAILSAVLLAAPWAIAVH, APFWYYLPMGLLGTLPWLGLL, ISPETLYLLAWVILPLLFFSI, LLTYILPCFAPLAMLMAANAV, AWLNGLFGLICLVVLAVLAFS, GALAVAMVIFAGWSLLGFIQL, and SALCPMVLAIGLPWALPQSLI.

Belongs to the glycosyltransferase 83 family.

The protein localises to the cell inner membrane. It catalyses the reaction 4-amino-4-deoxy-alpha-L-arabinopyranosyl di-trans,octa-cis-undecaprenyl phosphate + lipid IVA = lipid IIA + di-trans,octa-cis-undecaprenyl phosphate.. It participates in lipopolysaccharide metabolism; 4-amino-4-deoxy-beta-L-arabinose-lipid A biosynthesis. Its function is as follows. Catalyzes the transfer of the L-Ara4N moiety of the glycolipid undecaprenyl phosphate-alpha-L-Ara4N to lipid A. The modified arabinose is attached to lipid A and is required for resistance to polymyxin and cationic antimicrobial peptides. This Aeromonas hydrophila subsp. hydrophila (strain ATCC 7966 / DSM 30187 / BCRC 13018 / CCUG 14551 / JCM 1027 / KCTC 2358 / NCIMB 9240 / NCTC 8049) protein is Undecaprenyl phosphate-alpha-4-amino-4-deoxy-L-arabinose arabinosyl transferase.